Consider the following 730-residue polypeptide: Elongation factor 2 (730 aa).

One can recognise a tr-type G domain in the interval 19–229 (DYIRNIGIVA…NITFKDIIQY (211 aa)). Residues 28–35 (AHIDHGKT), 94–98 (DTPGH), and 148–151 (NKVD) contribute to the GTP site. His597 is subject to Diphthamide.

The protein belongs to the TRAFAC class translation factor GTPase superfamily. Classic translation factor GTPase family. EF-G/EF-2 subfamily.

It localises to the cytoplasm. Catalyzes the GTP-dependent ribosomal translocation step during translation elongation. During this step, the ribosome changes from the pre-translocational (PRE) to the post-translocational (POST) state as the newly formed A-site-bound peptidyl-tRNA and P-site-bound deacylated tRNA move to the P and E sites, respectively. Catalyzes the coordinated movement of the two tRNA molecules, the mRNA and conformational changes in the ribosome. The polypeptide is Elongation factor 2 (Methanosphaera stadtmanae (strain ATCC 43021 / DSM 3091 / JCM 11832 / MCB-3)).